Here is a 401-residue protein sequence, read N- to C-terminus: Sodium/glutamate symporter (401 aa).

The Periplasmic portion of the chain corresponds to 1-6; the sequence is MFHLDT. The helical transmembrane segment at 7-24 threads the bilayer; that stretch reads LATLVAATLTLLLGRKLV. Topologically, residues 25-32 are cytoplasmic; the sequence is HSVSFLKK. Residues 33–52 form a helical membrane-spanning segment; that stretch reads YTIPEPVAGGLLVALALLVL. Over 53-69 the chain is Periplasmic; the sequence is KKSMGWEVNFDMSLRDP. Residues 70–87 traverse the membrane as a helical segment; sequence LMLAFFATIGLNANIASL. Residues 88-93 lie on the Cytoplasmic side of the membrane; that stretch reads RAGGRV. Residues 94-116 traverse the membrane as a helical segment; that stretch reads VGIFLIVVVGLLVMQNAIGIGMA. The Periplasmic segment spans residues 117–156; it reads SLLGLDPLMGLLAGSITLSGGHGTGAAWSKLFIERYGFTN. The chain crosses the membrane as a helical span at residues 157–179; sequence ATEVAMACATFGLVLGGLIGGPV. Over 180–212 the chain is Cytoplasmic; sequence ARYLVKHSTTPNGIPDDQEVPTAFEKPDVGRMI. A helical transmembrane segment spans residues 213–235; the sequence is TSLVLIETIALIAICLTVGKIVA. The Periplasmic portion of the chain corresponds to 236–244; it reads QLLAGTAFE. The helical transmembrane segment at 245–267 threads the bilayer; the sequence is LPTFVCVLFVGVILSNGLSIMGF. Over 268–276 the chain is Cytoplasmic; the sequence is YRVFERAVS. A helical transmembrane segment spans residues 277–292; that stretch reads VLGNVSLSLFLAMALM. The Periplasmic segment spans residues 293–301; that stretch reads GLKLWELAS. The helical transmembrane segment at 302-324 threads the bilayer; sequence LALPMLAILVVQTIFMALYAIFV. The Cytoplasmic portion of the chain corresponds to 325-367; the sequence is TWRMMGKNYDAAVLAAGHCGFGLGATPTAIANMQAITERFGPS. The helical transmembrane segment at 368-390 threads the bilayer; the sequence is HMAFLVVPMVGAFFIDIVNALVI. The Periplasmic segment spans residues 391-401; the sequence is KLYLMLPIFAG.

It belongs to the glutamate:Na(+) symporter (ESS) (TC 2.A.27) family.

It is found in the cell inner membrane. Inhibited by the uncoupler carbonylcyanide m-chlorophenylhydrazone (CCCP) and the ionophore monensin. Functionally, catalyzes the sodium-dependent, binding-protein-independent transport of glutamate. The chain is Sodium/glutamate symporter from Escherichia coli (strain K12).